A 350-amino-acid polypeptide reads, in one-letter code: Tetraacyldisaccharide 4'-kinase (350 aa).

Residue 48 to 55 (SAGGTGKT) coordinates ATP.

It belongs to the LpxK family.

The catalysed reaction is a lipid A disaccharide + ATP = a lipid IVA + ADP + H(+). It functions in the pathway glycolipid biosynthesis; lipid IV(A) biosynthesis; lipid IV(A) from (3R)-3-hydroxytetradecanoyl-[acyl-carrier-protein] and UDP-N-acetyl-alpha-D-glucosamine: step 6/6. Transfers the gamma-phosphate of ATP to the 4'-position of a tetraacyldisaccharide 1-phosphate intermediate (termed DS-1-P) to form tetraacyldisaccharide 1,4'-bis-phosphate (lipid IVA). This is Tetraacyldisaccharide 4'-kinase from Chlorobium limicola (strain DSM 245 / NBRC 103803 / 6330).